Consider the following 106-residue polypeptide: Large ribosomal subunit protein eL36 (106 aa).

Basic and acidic residues predominate over residues 75–93; that stretch reads VRQEKVGHSQESKEEERGD. Positions 75-106 are disordered; the sequence is VRQEKVGHSQESKEEERGDVQCSPPDEGWWWY.

The protein belongs to the eukaryotic ribosomal protein eL36 family.

This is Large ribosomal subunit protein eL36 (RPL36) from Daucus carota (Wild carrot).